The sequence spans 810 residues: MPSAINAAVAQQTAAGSVPSTTSTTTEGTGGGTGGIYSAIISRNQPIIKVKEKTYEELHKKCLEENILYEDPDFPPNETSLFYSQKVPIKFEWKRPREICENPRFIIGGANRTDICQGELGDCWFLAAIACLTLNKKLLCRVIPHDQSFIQNYAGIFHFQFWRYGDWVDVIIDDCLPTYNNQLVFTKSSQRNEFWSALLEKAYAKLHGSYEALKGGNTTEAMEDFTGGVIEFYEIKDAPKDIYKIMKHAIARGSLMASSIDDNLGFHYGAAPRSDIGELIARMVKNLENAQMTYSTVDYQGTDERPAWTIMPMQYETRMSCGLVKGHAYSVTAVEETTYKGEKMRLVRLRNPWGQVEWNGPWSDKSEEWNFIDEEEKIRLQHKIAEDGEFWISLEDFMRHFTKLEICNLTPDTLEADKLQTWTVSVNEGRWVRGCSAGGCRNYPDTFWTNPQYRLKLLEEDDDPEDEEVICSFLVALMQKNRRKERKLGANLYTIGFAIYEVPKEMHGTKHHLQKDFFLYNASKARSKTYINMREISERFRLPPSEYVIIPSTYEPHQEGEFILRVFSEKRSLSEEVENMIEADRPSKKKKGKPIIFVSDRANSNKELTTDEDAGKDGEKTHVDEKKRSSAKAREKSEEETQFRNIFRQIAGDDMEICREELRNVLNNVVKKHKDLKTEGFELESSRSMIALMDTDGSGKINFDEFRHLWDKIKSWQKIFKHYDADHSGTINSYEMRNAVKDAGFRLNNQLYDIITMRYADKNMNIDFDSFICCFVRLDAMFRAFHAFDKDGDGIIKLNVLEWLQLTMYA.

The segment covering 9–27 (VAQQTAAGSVPSTTSTTTE) has biased composition (low complexity). Residues 9 to 31 (VAQQTAAGSVPSTTSTTTEGTGG) are disordered. The Calpain catalytic domain occupies 68–410 (LYEDPDFPPN…FTKLEICNLT (343 aa)). Active-site residues include Cys-123, His-327, and Asn-351. Residues 411 to 579 (PDTLEADKLQ…KRSLSEEVEN (169 aa)) are domain III. The interval 578 to 639 (ENMIEADRPS…SAKAREKSEE (62 aa)) is disordered. The segment at 580-638 (MIEADRPSKKKKGKPIIFVSDRANSNKELTTDEDAGKDGEKTHVDEKKRSSAKAREKSE) is linker. Residues 613–639 (DAGKDGEKTHVDEKKRSSAKAREKSEE) show a composition bias toward basic and acidic residues. 4 EF-hand domains span residues 638–672 (EEET…VVKK), 681–714 (FELE…DKIK), 711–746 (DKIK…AGFR), and 776–810 (VRLD…TMYA). Residues 639-809 (EETQFRNIFR…VLEWLQLTMY (171 aa)) are domain IV. 18 residues coordinate Ca(2+): Ala-651, Asp-654, Glu-656, Glu-661, Asp-694, Asp-696, Ser-698, Lys-700, Glu-705, Asp-724, Asp-726, Ser-728, Thr-730, Glu-735, Asp-789, Asp-791, Asp-793, and Ile-795.

It belongs to the peptidase C2 family. As to quaternary structure, homodimer; via EF-hand domain 4. Interacts with TTN/titin. Interacts with CMYA5; this interaction, which results in CMYA5 proteolysis, may protect CAPN3 from autolysis. Interacts with SIMC1. Interacts with UTP25; the interaction is required for CAPN3 translocation to the nucleolus. As to expression, skeletal muscle. Low levels in spleen, intestine and bone.

It localises to the cytoplasm. Its subcellular location is the nucleus. The protein resides in the nucleolus. The enzyme catalyses Broad endopeptidase activity.. With respect to regulation, activated by micromolar concentrations of calcium and inhibited by calpastatin. Calcium-regulated non-lysosomal thiol-protease. Proteolytically cleaves CTBP1. Mediates, with UTP25, the proteasome-independent degradation of p53/TP53. The chain is Calpain-3 (CAPN3) from Gallus gallus (Chicken).